We begin with the raw amino-acid sequence, 123 residues long: Ribosome-binding factor A (123 aa).

Belongs to the RbfA family. As to quaternary structure, monomer. Binds 30S ribosomal subunits, but not 50S ribosomal subunits or 70S ribosomes.

It is found in the cytoplasm. Its function is as follows. One of several proteins that assist in the late maturation steps of the functional core of the 30S ribosomal subunit. Associates with free 30S ribosomal subunits (but not with 30S subunits that are part of 70S ribosomes or polysomes). Required for efficient processing of 16S rRNA. May interact with the 5'-terminal helix region of 16S rRNA. The protein is Ribosome-binding factor A of Prochlorococcus marinus (strain NATL1A).